Reading from the N-terminus, the 317-residue chain is Olfactory receptor 8B3 (317 aa).

Topologically, residues 1–32 are extracellular; that stretch reads MISMLAGNGSSVTEFVLAGLTDRPELQLPLFY. N8 is a glycosylation site (N-linked (GlcNAc...) asparagine). The chain crosses the membrane as a helical span at residues 33-53; that stretch reads LFLIIYIITVVGNLGLIILIG. At 54-59 the chain is on the cytoplasmic side; sequence LNPHLH. Residues 60-80 traverse the membrane as a helical segment; sequence TPMYYFLFNLSFIDLCYSSVF. Topologically, residues 81–97 are extracellular; the sequence is SPKMLINFVSEKNSISY. Residues 98–118 traverse the membrane as a helical segment; the sequence is AGCMTQLFLFLFFVISECYML. The Cytoplasmic portion of the chain corresponds to 119 to 136; it reads TSMAYDRYVAICNPLLYK. The helical transmembrane segment at 137 to 157 threads the bilayer; that stretch reads VTMSPQICSVISFAAYGMGFA. Topologically, residues 158–199 are extracellular; sequence GSSAHTGCMLRLTFCNVNVINHYLCDILPLLQLSCTSTYVNE. A helical membrane pass occupies residues 200–220; it reads VVVLIVVGINITVPSFTILIS. The Cytoplasmic portion of the chain corresponds to 221 to 242; that stretch reads YVFILANILNIKSTQGRAKAFS. The chain crosses the membrane as a helical span at residues 243 to 263; sequence TCSSHIMAISLFFGSAAFMYL. Residues 264-274 lie on the Extracellular side of the membrane; it reads KYSSGSMEQGK. The chain crosses the membrane as a helical span at residues 275-294; that stretch reads ISSVFYTNVGPMLNPLIYSL. Topologically, residues 295–317 are cytoplasmic; sequence RNKDVKVALRKSLIKFREKTDFN.

This sequence belongs to the G-protein coupled receptor 1 family.

The protein resides in the cell membrane. Functionally, odorant receptor. In Mus musculus (Mouse), this protein is Olfactory receptor 8B3.